We begin with the raw amino-acid sequence, 314 residues long: Small ribosomal subunit protein uS2 (314 aa).

Composition is skewed to basic and acidic residues over residues G244–D265 and D271–A287. Residues G244–E314 form a disordered region. The span at A302–E314 shows a compositional bias: low complexity.

It belongs to the universal ribosomal protein uS2 family.

The chain is Small ribosomal subunit protein uS2 from Anaeromyxobacter dehalogenans (strain 2CP-C).